We begin with the raw amino-acid sequence, 361 residues long: MKDSIKAKLQSLIERHEEVSALLSEAGIISDQNKFRDLSKEYSHLEPIVKAFKEYTQALEDKQAAYEMLNEKDAELVEMAKEELKLANEAIEKLESELQILLLPRDPNDDANVFLEIRAGTGGDEASIFSGDLFKMYSKYAEQRGWKIEVISASEGEHGGYKEIISRIYGDGVYSQLKFESGAHRVQRVPATESQGRIHTSACTVAVMPEADEVEGIDINPADIKVDTFRASGAGGQHVNKTDSAIRITHIPTGVVVECQDQRSQHKNRAAAMLMLKSKLLQAEIDKQQKEQSDTRKSLVGSGDRSERIRTYNYPQGRVTDHRINLTLYKLDEVMEGSLDSIIQPLVLEHQADLLATMSDE.

Glutamine 237 is modified (N5-methylglutamine). Positions 287–297 (KQQKEQSDTRK) are enriched in basic and acidic residues. Residues 287-313 (KQQKEQSDTRKSLVGSGDRSERIRTYN) form a disordered region.

The protein belongs to the prokaryotic/mitochondrial release factor family. Methylated by PrmC. Methylation increases the termination efficiency of RF1.

Its subcellular location is the cytoplasm. In terms of biological role, peptide chain release factor 1 directs the termination of translation in response to the peptide chain termination codons UAG and UAA. This is Peptide chain release factor 1 from Francisella tularensis subsp. novicida (strain U112).